The sequence spans 211 residues: Large ribosomal subunit protein uL3 (211 aa).

Gln150 is subject to N5-methylglutamine.

It belongs to the universal ribosomal protein uL3 family. In terms of assembly, part of the 50S ribosomal subunit. Forms a cluster with proteins L14 and L19. Methylated by PrmB.

Its function is as follows. One of the primary rRNA binding proteins, it binds directly near the 3'-end of the 23S rRNA, where it nucleates assembly of the 50S subunit. This Pseudomonas putida (strain GB-1) protein is Large ribosomal subunit protein uL3.